A 437-amino-acid chain; its full sequence is UDP-N-acetylmuramate--L-alanine ligase (437 aa).

108–114 serves as a coordination point for ATP; it reads GAHGKTS.

It belongs to the MurCDEF family.

It is found in the cytoplasm. The enzyme catalyses UDP-N-acetyl-alpha-D-muramate + L-alanine + ATP = UDP-N-acetyl-alpha-D-muramoyl-L-alanine + ADP + phosphate + H(+). Its pathway is cell wall biogenesis; peptidoglycan biosynthesis. Its function is as follows. Cell wall formation. The sequence is that of UDP-N-acetylmuramate--L-alanine ligase from Staphylococcus epidermidis (strain ATCC 12228 / FDA PCI 1200).